A 204-amino-acid polypeptide reads, in one-letter code: Urease accessory protein UreG 1 (204 aa).

14-21 (GPVGSGKT) provides a ligand contact to GTP.

The protein belongs to the SIMIBI class G3E GTPase family. UreG subfamily. As to quaternary structure, homodimer. UreD, UreF and UreG form a complex that acts as a GTP-hydrolysis-dependent molecular chaperone, activating the urease apoprotein by helping to assemble the nickel containing metallocenter of UreC. The UreE protein probably delivers the nickel.

The protein resides in the cytoplasm. In terms of biological role, facilitates the functional incorporation of the urease nickel metallocenter. This process requires GTP hydrolysis, probably effectuated by UreG. This is Urease accessory protein UreG 1 from Methylorubrum extorquens (strain PA1) (Methylobacterium extorquens).